The primary structure comprises 517 residues: V-type proton ATPase subunit B (517 aa).

Residue Ser4 is modified to Phosphoserine. A Glycyl lysine isopeptide (Lys-Gly) (interchain with G-Cter in ubiquitin) cross-link involves residue Lys14. Residue Ser137 is modified to Phosphoserine. ATP is bound at residue Arg381. The segment at 487-517 (RARDDADEDEEDPDTRSSGKKKDASQEESLI) is disordered. Residues 500 to 511 (DTRSSGKKKDAS) show a composition bias toward basic and acidic residues. Phosphoserine occurs at positions 503 and 504. Residue Lys508 forms a Glycyl lysine isopeptide (Lys-Gly) (interchain with G-Cter in ubiquitin) linkage. Phosphoserine; by ATM or ATR is present on Ser511. Ser515 is subject to Phosphoserine.

This sequence belongs to the ATPase alpha/beta chains family. In terms of assembly, V-ATPase is a heteromultimeric enzyme composed of a peripheral catalytic V1 complex (components A to H) attached to an integral membrane V0 proton pore complex (components: a, c, c', c'', d, e, f and VOA1). Interacts with RAV1 and RAV2 components of the RAVE complex, which are essential for the stability and assembly of V-ATPase.

It is found in the vacuole membrane. In terms of biological role, non-catalytic subunit of the V1 complex of vacuolar(H+)-ATPase (V-ATPase), a multisubunit enzyme composed of a peripheral complex (V1) that hydrolyzes ATP and a membrane integral complex (V0) that translocates protons. V-ATPase is responsible for acidifying and maintaining the pH of intracellular compartments. The sequence is that of V-type proton ATPase subunit B (VMA2) from Saccharomyces cerevisiae (strain ATCC 204508 / S288c) (Baker's yeast).